Reading from the N-terminus, the 429-residue chain is Argininosuccinate lyase (429 aa).

This sequence belongs to the lyase 1 family. Argininosuccinate lyase subfamily.

It is found in the cytoplasm. The enzyme catalyses 2-(N(omega)-L-arginino)succinate = fumarate + L-arginine. It functions in the pathway amino-acid biosynthesis; L-arginine biosynthesis; L-arginine from L-ornithine and carbamoyl phosphate: step 3/3. The polypeptide is Argininosuccinate lyase (Pyrobaculum aerophilum (strain ATCC 51768 / DSM 7523 / JCM 9630 / CIP 104966 / NBRC 100827 / IM2)).